A 555-amino-acid chain; its full sequence is Transcriptional adapter 2b (555 aa).

The ZZ-type zinc finger occupies 8-63 (FTKYNCTNCQDDIQGIRVHCAECENFDLCLQCFAAGAEIGAHQNNHSYQFMDTGTS). Zn(2+)-binding residues include cysteine 13, cysteine 16, cysteine 27, cysteine 30, cysteine 36, cysteine 39, histidine 49, and histidine 53. The SANT domain maps to 69–121 (RGKGAWTAREEIRLLDAIEQYGFGNWEDISKHIETKSAEDAKEEYVNKFVNGT). The interval 318 to 372 (THRSTGPYGHGKTDHTHTSNGSHRPPSSSLHSPQPNLRKVEMSSGGEASSNSIAP) is disordered. Over residues 339-352 (SHRPPSSSLHSPQP) the composition is skewed to low complexity. Positions 363–372 (GEASSNSIAP) are enriched in polar residues.

In terms of assembly, component of histone acetyltransferase complexes containing Gcn5 and Ada3. As to quaternary structure, can heterooligomerize with Isoform A. Component of the Spt-Ada-Gcn5 acetyltransferase (SAGA) complex consisting of Ada1, Ada2b (Isoform B), Ada3, wda, Saf6, Spt3, Spt7, Spt20, Taf9, Taf10b, Taf12, Nipped-A/Tra1, Sf3b3, Sf3b5, not/nonstop, Sgf11, Sgf29, e(y)2, Atxn7 and Gcn5. Taf5 and Taf10, which has partially redundant properties with Taf10b, may also be part of this complex. Interacts (via C-terminus) with Spt3 and Taf12; the interactions are direct. Interacts with Ada3; the interaction is probably direct. May also interact directly with Spt7 and Gcn5. Interacts with p53. Can heterooligomerize with Isoform B. Component of the Chiffon histone acetyltransferase (CHAT) complex consisting of Ada3, Sgf29, Gcn5, chif/chiffon and Ada2b (Isoform A). Interacts (via N-terminus) with Gcn5 and Ada3; the interaction is direct. Can interact directly with Spt7 in vitro but in vivo this interaction is not stable probably due to the absence of other SAGA components. Interacts with p53. As to expression, expressed in nurse cells of stage 10 egg chambers and transcripts are dumped into the oocyte when nurse cells degenerate at late oogenesis.

It is found in the nucleus. Functionally, component of several Gcn5-containing histone acetyltransferase complexes that regulate nucleosome organization; involved in acetylation of histone H3, particularly on Lys-10 (H3K9ac) and Lys-15 (H3K14ac). Regulates the transcription of a subset of genes during development; affects recruitment of RNA polymerase II. May be involved in the function of some acidic activation domains, which activate transcription at distant sites. Involved in the p53-dependent apoptosis pathway response to DNA damage by genotoxic agents. In terms of biological role, component of the SAGA histone acetyltransferase complex, which predominantly acetylates histone H3. Its function is as follows. Component of the CHAT histone acetyltransferase complex, which predominantly acetylates histone H3. The sequence is that of Transcriptional adapter 2b from Drosophila melanogaster (Fruit fly).